Consider the following 123-residue polypeptide: NCLPDWSVYEGYCYKVFKERMNWADAEKFCMKQVKDGHLVSFRNSKEVDFMISLAFPMLKMELVWIGLSDYWRDCYWEWSDGAQLDYKAWDNERHCFAAKTTDNQWMRRKCSGEFYFVCKCPA.

In terms of domain architecture, C-type lectin spans N1–C121. Cystine bridges form between C2-C13, C30-C119, and C96-C111.

This sequence belongs to the snaclec family. In terms of assembly, heterodimer of subunits alpha and beta; disulfide-linked. Forms an active complex with the pentameric immunoglobuline Mkappa (IgMkappa). Expressed by the venom gland.

The protein resides in the secreted. Echicetin itself inhibits aggregation of washed platelets induced by vWF, thrombin or alboaggregin-A. However, when complexed with the pentameric plasma immunoglobulin Mkappa (IgMkappa), echicetin binds specifically to GPIb and activates platelets. This is caused by P-selectin expression and activation of alpha-IIb/beta-3 as well as tyrosine phosphorylation of several signal transduction molecules, including p53/56(LYN), p64, p72(SYK), p70 to p90, and p120. In vivo, it induces thrombocytopenia when injected into mice, probably accounting of activation of platelets rather than inhibition. The protein is Snaclec echicetin subunit beta of Echis carinatus sochureki (Saw-scaled viper).